We begin with the raw amino-acid sequence, 717 residues long: Polyribonucleotide nucleotidyltransferase (717 aa).

Asp496 and Asp502 together coordinate Mg(2+). One can recognise a KH domain in the interval 563–622; that stretch reads PRLLTIKIDPDLIGLVIGPGGKTVKGITEQTGTKIDIDDDGTVTISSTDGEQAEKAKRLI. The 69-residue stretch at 632-700 folds into the S1 motif domain; that stretch reads GEVYLGRVTR…SKGRLNLTRL (69 aa).

It belongs to the polyribonucleotide nucleotidyltransferase family. The cofactor is Mg(2+).

Its subcellular location is the cytoplasm. The catalysed reaction is RNA(n+1) + phosphate = RNA(n) + a ribonucleoside 5'-diphosphate. In terms of biological role, involved in mRNA degradation. Catalyzes the phosphorolysis of single-stranded polyribonucleotides processively in the 3'- to 5'-direction. The polypeptide is Polyribonucleotide nucleotidyltransferase (Microcystis aeruginosa (strain NIES-843 / IAM M-2473)).